The chain runs to 325 residues: MTDLPRDPRHDPVLLDEVIAALAIAPGERHVDATFGAGGYTRAMLAAGAEVIACDRDPDAIAGGEALVAEADGRLTLIHGRFGEIDRLLAERGIDAVDGITFDIGVSSMQLDQGERGFSFQKDGPLDMRMAQEGESAADWLNRADEYEIADVLYHYGDERQSRRVARAIVAARPLTRTSELASVVRKALRHPPGAPKDPATKSFQAIRIHINRELDELVAGLAAAERVLRPGGRLAVVSFHSTEDRIVKHFLRERSGGDAAGSRHRPAPTAAARAATFETPARKVRPGKAEEARNPRARSATLRSAVRTAAPAWPGNSMKEAMSC.

S-adenosyl-L-methionine-binding positions include 38-40, Asp55, Phe82, Asp103, and Gln110; that span reads GGY. Disordered stretches follow at residues 256–275 and 281–307; these read SGGD…AARA and PARK…RSAV.

This sequence belongs to the methyltransferase superfamily. RsmH family.

Its subcellular location is the cytoplasm. The catalysed reaction is cytidine(1402) in 16S rRNA + S-adenosyl-L-methionine = N(4)-methylcytidine(1402) in 16S rRNA + S-adenosyl-L-homocysteine + H(+). Its function is as follows. Specifically methylates the N4 position of cytidine in position 1402 (C1402) of 16S rRNA. This is Ribosomal RNA small subunit methyltransferase H from Sphingopyxis alaskensis (strain DSM 13593 / LMG 18877 / RB2256) (Sphingomonas alaskensis).